The following is a 227-amino-acid chain: Peptidyl-tRNA hydrolase (227 aa).

TRNA is bound at residue Y14. H19 serves as the catalytic Proton acceptor. TRNA is bound by residues F64, N66, and N112. A disordered region spans residues 182–227 (RIALLTQPPKPPKPPKPPKDGAKETAGKGTEAETAKPPGPAAGRTG). Positions 198-215 (PPKDGAKETAGKGTEAET) are enriched in basic and acidic residues.

This sequence belongs to the PTH family. In terms of assembly, monomer.

The protein resides in the cytoplasm. The enzyme catalyses an N-acyl-L-alpha-aminoacyl-tRNA + H2O = an N-acyl-L-amino acid + a tRNA + H(+). Hydrolyzes ribosome-free peptidyl-tRNAs (with 1 or more amino acids incorporated), which drop off the ribosome during protein synthesis, or as a result of ribosome stalling. In terms of biological role, catalyzes the release of premature peptidyl moieties from peptidyl-tRNA molecules trapped in stalled 50S ribosomal subunits, and thus maintains levels of free tRNAs and 50S ribosomes. The chain is Peptidyl-tRNA hydrolase from Rhodospirillum centenum (strain ATCC 51521 / SW).